Reading from the N-terminus, the 560-residue chain is DNA ligase B (560 aa).

The active-site N6-AMP-lysine intermediate is Lys124.

This sequence belongs to the NAD-dependent DNA ligase family. LigB subfamily.

It carries out the reaction NAD(+) + (deoxyribonucleotide)n-3'-hydroxyl + 5'-phospho-(deoxyribonucleotide)m = (deoxyribonucleotide)n+m + AMP + beta-nicotinamide D-nucleotide.. Functionally, catalyzes the formation of phosphodiester linkages between 5'-phosphoryl and 3'-hydroxyl groups in double-stranded DNA using NAD as a coenzyme and as the energy source for the reaction. This is DNA ligase B from Escherichia coli (strain ATCC 8739 / DSM 1576 / NBRC 3972 / NCIMB 8545 / WDCM 00012 / Crooks).